The sequence spans 498 residues: uncharacterized protein (498 aa).

The next 11 helical transmembrane spans lie at 54-74 (LLKM…MAFL), 100-120 (VAVS…VVLV), 128-148 (MLAF…FMSS), 150-170 (GGLI…FPAL), 188-208 (SYLF…AYAL), 221-241 (WIYI…LFAL), 302-322 (VLYG…FVGL), 326-346 (YMTI…AWLS), 353-373 (AVYL…MLAS), 381-401 (TATY…LGWL), and 446-466 (AFTL…FFSL).

It belongs to the major facilitator superfamily. Allantoate permease family.

It is found in the membrane. This is an uncharacterized protein from Schizosaccharomyces pombe (strain 972 / ATCC 24843) (Fission yeast).